Consider the following 240-residue polypeptide: UDP-2,3-diacylglucosamine hydrolase (240 aa).

Positions 8, 10, 41, 79, and 114 each coordinate Mn(2+). 79–80 (NR) lines the substrate pocket. 5 residues coordinate substrate: Asp122, Ser160, Asn164, Lys167, and His195. Mn(2+) contacts are provided by His195 and His197.

The protein belongs to the LpxH family. Mn(2+) serves as cofactor.

It is found in the cell inner membrane. It catalyses the reaction UDP-2-N,3-O-bis[(3R)-3-hydroxytetradecanoyl]-alpha-D-glucosamine + H2O = 2-N,3-O-bis[(3R)-3-hydroxytetradecanoyl]-alpha-D-glucosaminyl 1-phosphate + UMP + 2 H(+). It participates in glycolipid biosynthesis; lipid IV(A) biosynthesis; lipid IV(A) from (3R)-3-hydroxytetradecanoyl-[acyl-carrier-protein] and UDP-N-acetyl-alpha-D-glucosamine: step 4/6. Functionally, hydrolyzes the pyrophosphate bond of UDP-2,3-diacylglucosamine to yield 2,3-diacylglucosamine 1-phosphate (lipid X) and UMP by catalyzing the attack of water at the alpha-P atom. Involved in the biosynthesis of lipid A, a phosphorylated glycolipid that anchors the lipopolysaccharide to the outer membrane of the cell. The protein is UDP-2,3-diacylglucosamine hydrolase of Proteus mirabilis (strain HI4320).